Reading from the N-terminus, the 212-residue chain is Regulator of G-protein signaling 2 (212 aa).

2 disordered regions span residues 11-33 and 48-69; these read HDCG…REKM and FLQN…PQTF. Residues 32 to 66 are necessary for membrane association; sequence KMKRTLLKDWKTRLSYFLQNSSSPGKPKTGKKSKP. The interval 79–116 is necessary to inhibit protein synthesis; that stretch reads LWAEAFDELLASKYGLAAFRAFLKSEFCEENIEFWLAC. The RGS domain occupies 83–199; sequence AFDELLASKY…LESEFYQDLC (117 aa).

In terms of assembly, interacts with GNAQ. Does not interact with GNAI1 and GNAI3. Interacts with EIF2B5. Interacts with PRKG1 (isoform alpha). In terms of processing, phosphorylated by protein kinase C. Phosphorylation by PRKG1 leads to activation of RGS2 activity.

It localises to the cell membrane. It is found in the cytoplasm. The protein resides in the nucleus. Its subcellular location is the nucleolus. Regulates G protein-coupled receptor signaling cascades. Inhibits signal transduction by increasing the GTPase activity of G protein alpha subunits, thereby driving them into their inactive GDP-bound form. It is involved in the negative regulation of the angiotensin-activated signaling pathway. Plays a role in the regulation of blood pressure in response to signaling via G protein-coupled receptors and GNAQ. Plays a role in regulating the constriction and relaxation of vascular smooth muscle. Binds EIF2B5 and blocks its activity, thereby inhibiting the translation of mRNA into protein. This is Regulator of G-protein signaling 2 (RGS2) from Sus scrofa (Pig).